The sequence spans 294 residues: Bidirectional sugar transporter SWEET13 (294 aa).

Topologically, residues 1 to 7 (MALTNNL) are extracellular. A helical membrane pass occupies residues 8 to 28 (WAFVFGILGNIISFVVFLAPV). Residues 10–97 (FVFGILGNII…VLFVSYANKK (88 aa)) form the MtN3/slv 1 domain. Over 29–42 (PTFVRICKKKSTEG) the chain is Cytoplasmic. Residues 43 to 63 (FQSLPYVSALFSAMLWIYYAM) traverse the membrane as a helical segment. The Extracellular portion of the chain corresponds to 64–69 (QKDGTA). A helical transmembrane segment spans residues 70 to 90 (FLLITINAFGCVIETIYIVLF). The Cytoplasmic portion of the chain corresponds to 91 to 104 (VSYANKKTRISTLK). The helical transmembrane segment at 105–125 (VLGLLNFLGFAAIVLVCELLT) threads the bilayer. The Extracellular segment spans residues 126–132 (KGSTREK). Residues 133–153 (VLGGICVGFSVSVFAAPLSIM) traverse the membrane as a helical segment. The 84-residue stretch at 133–216 (VLGGICVGFS…MILYIIFKYY (84 aa)) folds into the MtN3/slv 2 domain. Residues 154-166 (RVVVRTRSVEFMP) are Cytoplasmic-facing. The chain crosses the membrane as a helical span at residues 167-187 (FSLSLFLTISAVTWLFYGLAI). Residues 188–192 (KDFYV) lie on the Extracellular side of the membrane. Residues 193 to 213 (ALPNVLGAFLGAVQMILYIIF) traverse the membrane as a helical segment. The Cytoplasmic portion of the chain corresponds to 214–294 (KYYKTPVAQK…NKDVQKQSQV (81 aa)). The segment at 273–294 (KSQNMTDPKDQINKDVQKQSQV) is disordered. A compositionally biased stretch (basic and acidic residues) spans 279-294 (DPKDQINKDVQKQSQV).

The protein belongs to the SWEET sugar transporter family. Forms heterooligomers with SWEET1, SWEET3, SWEET6, SWEET7, SWEET8, SWEET9, SWEET11 and SWEET17. In terms of tissue distribution, expressed at low levels in leaves.

It is found in the cell membrane. In terms of biological role, mediates both low-affinity uptake and efflux of sugar across the plasma membrane. Involved in nurturing the male gametophyte. This Arabidopsis thaliana (Mouse-ear cress) protein is Bidirectional sugar transporter SWEET13.